We begin with the raw amino-acid sequence, 122 residues long: Large ribosomal subunit protein uL14c (122 aa).

Belongs to the universal ribosomal protein uL14 family. Part of the 50S ribosomal subunit.

The protein resides in the plastid. It localises to the chloroplast. Binds to 23S rRNA. The sequence is that of Large ribosomal subunit protein uL14c from Porphyra purpurea (Red seaweed).